A 309-amino-acid chain; its full sequence is Clotting factor G beta subunit (309 aa).

Positions 1-31 (MDISFLVFITLSMALFSSNVTGTSVTSRVRR) are cleaved as a signal peptide. Intrachain disulfides connect Cys38–Cys158, Cys74–Cys90, Cys205–Cys227, and Cys238–Cys268. Residues 47-292 (IIGGGIATPH…YVNWLQEITF (246 aa)) enclose the Peptidase S1 domain. The active-site Charge relay system is the His89. N-linked (GlcNAc...) asparagine glycosylation is present at Asn100. Asp138 acts as the Charge relay system in catalysis. N-linked (GlcNAc...) asparagine glycosylation occurs at Asn206. Catalysis depends on Ser242, which acts as the Charge relay system.

This sequence belongs to the peptidase S1 family. In terms of assembly, clotting factor G is a heterodimer composed of two non-covalently associated subunits, alpha and beta. Upon activation, converted to a two-chain active form linked by a disulfide bond. Forms a covalent heterodimer with intracellular coagulation inhibitor 3/LICI-3. In terms of tissue distribution, expressed in the hemocytes (at protein level).

It catalyses the reaction Selective cleavage of 98-Arg-|-Ile-99 bond in Limulus proclotting enzyme to form active clotting enzyme.. With respect to regulation, binding to (1-&gt;3)-beta-D-glucan to alpha subunit, induces autocatalysis and activation of beta subunit. Inhibited by intracellular coagulation inhibitor 3/LICI-3 and to a lesser extend by intracellular coagulation inhibitor 2/LICI-2. In terms of biological role, component of the heterodimer clotting factor G which may play a role in defense mechanisms against fungi. Initiates a (1-&gt;3)-beta-glucan-sensing clotting pathway whereby the alpha subunit binds to glucans containing (1-&gt;3)-beta linkages, which are components of the fungal cell wall, and the beta subunit catalyzes the activation of proclotting enzyme. The sequence is that of Clotting factor G beta subunit from Tachypleus tridentatus (Japanese horseshoe crab).